Here is a 345-residue protein sequence, read N- to C-terminus: Protein D345L (345 aa).

It belongs to the asfivirus D345L family. In terms of assembly, interacts with IKKA/CHUK and IKBKB.

It localises to the host cytoplasm. Functionally, plays a role in the negative regulation of host NF-kappa-B signaling pathway. Mechanistically, recruits IKKA/CHUK and IKBKB to suppress their kinase activity towards NFKBIA. In Ornithodoros (relapsing fever ticks), this protein is Protein D345L.